Here is a 431-residue protein sequence, read N- to C-terminus: 5-methylthioadenosine/S-adenosylhomocysteine deaminase (431 aa).

H61 and H63 together coordinate Zn(2+). The substrate site is built by E90 and H183. H210 lines the Zn(2+) pocket. Substrate-binding residues include E213 and D298. Residue D298 participates in Zn(2+) binding.

It belongs to the metallo-dependent hydrolases superfamily. MTA/SAH deaminase family. Zn(2+) is required as a cofactor.

It catalyses the reaction S-adenosyl-L-homocysteine + H2O + H(+) = S-inosyl-L-homocysteine + NH4(+). The catalysed reaction is S-methyl-5'-thioadenosine + H2O + H(+) = S-methyl-5'-thioinosine + NH4(+). In terms of biological role, catalyzes the deamination of 5-methylthioadenosine and S-adenosyl-L-homocysteine into 5-methylthioinosine and S-inosyl-L-homocysteine, respectively. Is also able to deaminate adenosine. The sequence is that of 5-methylthioadenosine/S-adenosylhomocysteine deaminase from Halobacterium salinarum (strain ATCC 700922 / JCM 11081 / NRC-1) (Halobacterium halobium).